A 337-amino-acid chain; its full sequence is Probable dihydroorotase (337 aa).

Zn(2+) is bound by residues H12, H14, K95, H132, H170, and D240. N6-carboxylysine is present on K95.

It belongs to the metallo-dependent hydrolases superfamily. DHOase family. Class II DHOase subfamily. Zn(2+) is required as a cofactor.

It catalyses the reaction (S)-dihydroorotate + H2O = N-carbamoyl-L-aspartate + H(+). It participates in pyrimidine metabolism; UMP biosynthesis via de novo pathway; (S)-dihydroorotate from bicarbonate: step 3/3. This is Probable dihydroorotase (ura2) from Schizosaccharomyces pombe (strain 972 / ATCC 24843) (Fission yeast).